Consider the following 196-residue polypeptide: Large ribosomal subunit protein uL5 (196 aa).

Belongs to the universal ribosomal protein uL5 family. Part of the 50S ribosomal subunit; part of the 5S rRNA/L5/L18/L25 subcomplex. Contacts the 5S rRNA and the P site tRNA. Forms a bridge to the 30S subunit in the 70S ribosome.

This is one of the proteins that bind and probably mediate the attachment of the 5S RNA into the large ribosomal subunit, where it forms part of the central protuberance. In the 70S ribosome it contacts protein S13 of the 30S subunit (bridge B1b), connecting the 2 subunits; this bridge is implicated in subunit movement. Contacts the P site tRNA; the 5S rRNA and some of its associated proteins might help stabilize positioning of ribosome-bound tRNAs. This chain is Large ribosomal subunit protein uL5, found in Rhodopirellula baltica (strain DSM 10527 / NCIMB 13988 / SH1).